Reading from the N-terminus, the 427-residue chain is 2-oxoglutarate and iron-dependent oxygenase JMJD4 (427 aa).

The region spanning 147-306 (SLVNDLEDIF…NMWHFLQQEL (160 aa)) is the JmjC domain. Fe cation contacts are provided by His194, Asp196, and His274.

This sequence belongs to the JMJD6 family. As to quaternary structure, interacts with ETF1. Interacts with the ETF1-GSPT1 complex. It depends on Fe(2+) as a cofactor.

It is found in the cytoplasm. It catalyses the reaction L-lysyl-[protein] + 2-oxoglutarate + O2 = 4-hydroxy-L-lysyl-[protein] + succinate + CO2. Its function is as follows. Catalyzes the 2-oxoglutarate and iron-dependent C4-lysyl hydroxylation of ETF1 at 'Lys-63' thereby promoting the translational termination efficiency of ETF1. Not essential for embryonic stem cell (ESC) maintenance and the embryonic and postnatal development. The polypeptide is 2-oxoglutarate and iron-dependent oxygenase JMJD4 (Jmjd4) (Mus musculus (Mouse)).